Here is a 250-residue protein sequence, read N- to C-terminus: uncharacterized protein (250 aa).

Residues Met-1–Ala-19 form the signal peptide. 2 consecutive transmembrane segments (helical) span residues Ile-51–Phe-71 and Met-73–Gly-93. Positions Ala-226–Lys-250 are disordered.

The protein resides in the cell membrane. This is an uncharacterized protein from Mycobacterium tuberculosis (strain CDC 1551 / Oshkosh).